A 493-amino-acid polypeptide reads, in one-letter code: Ribonuclease Y (493 aa).

Residues 19–39 (IFAILFLIIVILNLGLLVFLA) form a helical membrane-spanning segment. In terms of domain architecture, KH spans 172–241 (SASFTVIESD…LTIRNILIND (70 aa)). One can recognise an HD domain in the interval 300–392 (VLSHCLETGF…TQIGDKLSAG (93 aa)).

Belongs to the RNase Y family.

Its subcellular location is the cell membrane. In terms of biological role, endoribonuclease that initiates mRNA decay. The chain is Ribonuclease Y from Mycoplasma pneumoniae (strain ATCC 29342 / M129 / Subtype 1) (Mycoplasmoides pneumoniae).